Consider the following 331-residue polypeptide: Probable leucine carboxyl methyltransferase 1 (331 aa).

S-adenosyl-L-methionine contacts are provided by residues R82, G107, D131, 179-180, and E206; that span reads DL.

This sequence belongs to the methyltransferase superfamily. LCMT family.

The catalysed reaction is [phosphatase 2A protein]-C-terminal L-leucine + S-adenosyl-L-methionine = [phosphatase 2A protein]-C-terminal L-leucine methyl ester + S-adenosyl-L-homocysteine. Functionally, methylates the carboxyl group of the C-terminal leucine residue of protein phosphatase 2A catalytic subunits to form alpha-leucine ester residues. This Caenorhabditis briggsae protein is Probable leucine carboxyl methyltransferase 1.